A 310-amino-acid polypeptide reads, in one-letter code: Methionyl-tRNA formyltransferase (310 aa).

(6S)-5,6,7,8-tetrahydrofolate is bound at residue 109-112; it reads SLLP.

This sequence belongs to the Fmt family.

It carries out the reaction L-methionyl-tRNA(fMet) + (6R)-10-formyltetrahydrofolate = N-formyl-L-methionyl-tRNA(fMet) + (6S)-5,6,7,8-tetrahydrofolate + H(+). Functionally, attaches a formyl group to the free amino group of methionyl-tRNA(fMet). The formyl group appears to play a dual role in the initiator identity of N-formylmethionyl-tRNA by promoting its recognition by IF2 and preventing the misappropriation of this tRNA by the elongation apparatus. The sequence is that of Methionyl-tRNA formyltransferase from Pseudomonas putida (strain W619).